A 385-amino-acid polypeptide reads, in one-letter code: Anhydro-N-acetylmuramic acid kinase (385 aa).

Position 12–19 (12–19 (GTSLDGID)) interacts with ATP.

It belongs to the anhydro-N-acetylmuramic acid kinase family.

The enzyme catalyses 1,6-anhydro-N-acetyl-beta-muramate + ATP + H2O = N-acetyl-D-muramate 6-phosphate + ADP + H(+). It participates in amino-sugar metabolism; 1,6-anhydro-N-acetylmuramate degradation. The protein operates within cell wall biogenesis; peptidoglycan recycling. Catalyzes the specific phosphorylation of 1,6-anhydro-N-acetylmuramic acid (anhMurNAc) with the simultaneous cleavage of the 1,6-anhydro ring, generating MurNAc-6-P. Is required for the utilization of anhMurNAc either imported from the medium or derived from its own cell wall murein, and thus plays a role in cell wall recycling. The polypeptide is Anhydro-N-acetylmuramic acid kinase (Bacillus thuringiensis (strain Al Hakam)).